The primary structure comprises 126 residues: Large ribosomal subunit protein bL12 (126 aa).

Belongs to the bacterial ribosomal protein bL12 family. As to quaternary structure, homodimer. Part of the ribosomal stalk of the 50S ribosomal subunit. Forms a multimeric L10(L12)X complex, where L10 forms an elongated spine to which 2 to 4 L12 dimers bind in a sequential fashion. Binds GTP-bound translation factors.

Its function is as follows. Forms part of the ribosomal stalk which helps the ribosome interact with GTP-bound translation factors. Is thus essential for accurate translation. This is Large ribosomal subunit protein bL12 from Nocardia farcinica (strain IFM 10152).